We begin with the raw amino-acid sequence, 306 residues long: Ribosomal RNA small subunit methyltransferase H (306 aa).

Residues 33–35 (GGY), Asp-51, Phe-78, Asp-96, and Gln-103 each bind S-adenosyl-L-methionine.

This sequence belongs to the methyltransferase superfamily. RsmH family.

The protein resides in the cytoplasm. The catalysed reaction is cytidine(1402) in 16S rRNA + S-adenosyl-L-methionine = N(4)-methylcytidine(1402) in 16S rRNA + S-adenosyl-L-homocysteine + H(+). Its function is as follows. Specifically methylates the N4 position of cytidine in position 1402 (C1402) of 16S rRNA. In Rickettsia felis (strain ATCC VR-1525 / URRWXCal2) (Rickettsia azadi), this protein is Ribosomal RNA small subunit methyltransferase H.